A 92-amino-acid polypeptide reads, in one-letter code: Small ribosomal subunit protein uS19 (92 aa).

This sequence belongs to the universal ribosomal protein uS19 family.

Its function is as follows. Protein S19 forms a complex with S13 that binds strongly to the 16S ribosomal RNA. This chain is Small ribosomal subunit protein uS19, found in Rhodopseudomonas palustris (strain BisB18).